The following is a 2599-amino-acid chain: Protein DOP1 homolog (2599 aa).

Disordered regions lie at residues 532-571 and 595-701; these read EQSG…SDSR and ASNQ…LDEE. Composition is skewed to polar residues over residues 534–549, 595–604, and 625–636; these read SGGS…NSAS, ASNQSVGRQS, and ASDTGQQSSSDL. At serine 753 the chain carries Phosphoserine. The span at 1240-1251 shows a compositional bias: basic and acidic residues; that stretch reads PRIEIPHKETPL. Disordered stretches follow at residues 1240–1316 and 1347–1368; these read PRIE…SSSA and TYRL…EQKD. Residues 1264–1282 show a composition bias toward polar residues; the sequence is QPSQEQPANQPDNSLQYDQ. Residues 1297–1309 are compositionally biased toward basic and acidic residues; that stretch reads SELRETSIEKEDS. Threonine 1355 carries the phosphothreonine modification. Phosphoserine is present on residues serine 1360, serine 1363, and serine 1371. Residues 1409–1442 form a disordered region; sequence CISKTSTDSNISGSHVEQPEQEEETEPGTESTIN. A compositionally biased stretch (polar residues) spans 1410 to 1423; that stretch reads ISKTSTDSNISGSH. Phosphoserine is present on serine 2525.

Belongs to the DOP1 family.

It is found in the golgi apparatus membrane. Its function is as follows. May be involved in protein traffic between late Golgi and early endosomes. In Drosophila melanogaster (Fruit fly), this protein is Protein DOP1 homolog.